Consider the following 305-residue polypeptide: Beta-carotene 3-hydroxylase, chloroplastic (305 aa).

Residues 1 to 41 (MAFAMSSSLTLFQYQSFGKKPFFSRRRDFAGCSMMNPLVAR) constitute a chloroplast transit peptide. A run of 2 helical transmembrane segments spans residues 98 to 118 (YLVA…AAVY) and 129 to 149 (AVPL…AVGM). The region spanning 146-272 (AVGMEYWARW…KFNGVPYGLF (127 aa)) is the Fatty acid hydroxylase domain. A Histidine box-1 motif is present at residues 157-162 (HRALWH). Residues 169–173 (HESHH) carry the Histidine box-2 motif. The next 2 helical transmembrane spans lie at 184–204 (DVFA…GFFH) and 207–227 (FFSG…MAYM). The Histidine box-3 signature appears at 230-235 (HDGLVH). The Histidine box-4 motif lies at 256–260 (HQIHH).

It belongs to the sterol desaturase family. As to quaternary structure, homodimer. Expressed in flower buds and lips. Detected in roots and leaves.

It is found in the plastid. The protein resides in the chloroplast membrane. The enzyme catalyses all-trans-beta-carotene + 4 reduced [2Fe-2S]-[ferredoxin] + 2 O2 + 4 H(+) = all-trans-zeaxanthin + 4 oxidized [2Fe-2S]-[ferredoxin] + 2 H2O. Its function is as follows. Nonheme diiron monooxygenase involved in the biosynthesis of xanthophylls. Specific for beta-ring hydroxylations of beta-carotene. Uses ferredoxin as an electron donor. The polypeptide is Beta-carotene 3-hydroxylase, chloroplastic (BHY) (Oncidium hybrid cultivar (Orchid)).